A 307-amino-acid polypeptide reads, in one-letter code: Serine/threonine-protein phosphatase PP2A-1 catalytic subunit (307 aa).

Positions 54, 56, 82, and 114 each coordinate Mn(2+). The active-site Proton donor is the H115. Mn(2+) contacts are provided by H164 and H238. The tract at residues 286-307 is disordered; the sequence is FEPAPRRGAEGEVNRRTPDYFL. The segment covering 289-307 has biased composition (basic and acidic residues); that stretch reads APRRGAEGEVNRRTPDYFL.

Belongs to the PPP phosphatase family. PP-2A subfamily. Mn(2+) serves as cofactor.

The catalysed reaction is O-phospho-L-seryl-[protein] + H2O = L-seryl-[protein] + phosphate. The enzyme catalyses O-phospho-L-threonyl-[protein] + H2O = L-threonyl-[protein] + phosphate. The chain is Serine/threonine-protein phosphatase PP2A-1 catalytic subunit from Acetabularia peniculus (Green alga).